The chain runs to 208 residues: Small ribosomal subunit protein uS4 (208 aa).

The S4 RNA-binding domain maps to Gln-98 to Leu-163.

Belongs to the universal ribosomal protein uS4 family. In terms of assembly, part of the 30S ribosomal subunit. Contacts protein S5. The interaction surface between S4 and S5 is involved in control of translational fidelity.

In terms of biological role, one of the primary rRNA binding proteins, it binds directly to 16S rRNA where it nucleates assembly of the body of the 30S subunit. With S5 and S12 plays an important role in translational accuracy. This Campylobacter jejuni (strain RM1221) protein is Small ribosomal subunit protein uS4.